A 566-amino-acid polypeptide reads, in one-letter code: Medium-chain fatty-acid--CoA ligase (566 aa).

Position 231–242 (231–242) interacts with ATP; sequence ILASERAYCARL.

The protein belongs to the ATP-dependent AMP-binding enzyme family. As to quaternary structure, homodimer. It depends on Mg(2+) as a cofactor.

The protein resides in the cell membrane. The catalysed reaction is hexanoate + ATP + CoA = hexanoyl-CoA + AMP + diphosphate. It catalyses the reaction octanoate + ATP + CoA = octanoyl-CoA + AMP + diphosphate. It carries out the reaction dodecanoate + ATP + CoA = dodecanoyl-CoA + AMP + diphosphate. It functions in the pathway lipid metabolism; fatty acid beta-oxidation. Its function is as follows. Catalyzes the esterification, concomitant with transport, of exogenous fatty acids into metabolically active CoA thioesters for subsequent degradation or incorporation into phospholipids. Is maximally active on C6:0, C8:0 and C12:0 fatty acids, while has a low activity on C14-C18 chain length fatty acids. Is involved in the anaerobic beta-oxidative degradation of fatty acids, which allows anaerobic growth of E.coli on fatty acids as a sole carbon and energy source in the presence of nitrate or fumarate as a terminal electron acceptor. Can functionally replace FadD under anaerobic conditions. The chain is Medium-chain fatty-acid--CoA ligase from Escherichia coli (strain K12).